The following is a 498-amino-acid chain: ATP synthase subunit beta, chloroplastic (498 aa).

172–179 is an ATP binding site; it reads GGAGVGKT.

The protein belongs to the ATPase alpha/beta chains family. F-type ATPases have 2 components, CF(1) - the catalytic core - and CF(0) - the membrane proton channel. CF(1) has five subunits: alpha(3), beta(3), gamma(1), delta(1), epsilon(1). CF(0) has four main subunits: a(1), b(1), b'(1) and c(9-12).

Its subcellular location is the plastid. It is found in the chloroplast thylakoid membrane. The enzyme catalyses ATP + H2O + 4 H(+)(in) = ADP + phosphate + 5 H(+)(out). In terms of biological role, produces ATP from ADP in the presence of a proton gradient across the membrane. The catalytic sites are hosted primarily by the beta subunits. This chain is ATP synthase subunit beta, chloroplastic, found in Elaeis oleifera (American oil palm).